The sequence spans 158 residues: Protein-export protein SecB (158 aa).

The protein belongs to the SecB family. Homotetramer, a dimer of dimers. One homotetramer interacts with 1 SecA dimer.

The protein resides in the cytoplasm. One of the proteins required for the normal export of preproteins out of the cell cytoplasm. It is a molecular chaperone that binds to a subset of precursor proteins, maintaining them in a translocation-competent state. It also specifically binds to its receptor SecA. The protein is Protein-export protein SecB of Rhodopseudomonas palustris (strain HaA2).